The following is a 175-amino-acid chain: Arsenite oxidase subunit AioB (175 aa).

The segment at residues 1 to 32 is a signal peptide (tat-type signal); that stretch reads MSDTINLTRRGFLKVSGSGVAVAATLSPIASA. The Rieske domain occupies 62–158; that stretch reads NEPVSFTYPD…LRYDEASDAL (97 aa). 4 residues coordinate [2Fe-2S] cluster: cysteine 102, histidine 104, cysteine 120, and histidine 123. Cysteines 107 and 122 form a disulfide.

The protein belongs to the AOX family. Heterodimer consisting of a large and a small subunit. It depends on [2Fe-2S] cluster as a cofactor. Predicted to be exported by the Tat system. The position of the signal peptide cleavage has not been experimentally proven.

The enzyme catalyses 2 oxidized [azurin] + arsenite + H2O = 2 reduced [azurin] + arsenate + 3 H(+). Functionally, involved in the detoxification of arsenic. Oxidizes As(III)O3(3-) (arsenite) to the somewhat less toxic As(V)O4(3-) (arsenate). The protein is Arsenite oxidase subunit AioB (aioB) of Alcaligenes faecalis.